The primary structure comprises 424 residues: Sulfatase ppz1 (424 aa).

Residues Asp13, Asp203, and Asn204 each coordinate Ca(2+).

Belongs to the sulfatase family. Ca(2+) is required as a cofactor.

Functionally, sulfatase; part of the gene cluster that mediates the biosynthesis of pyrrolopyrazines, secondary metabolites showing insecticidal activity. The role of ppz1 within the pathway has still to be determined. The single multifunctional NRPS ppzA is sufficient to produce peramine via condensation of 1-pyrroline-5-carboxylate and arginine, N-methylation of the alpha-amino group of arginine and reduction of the thioester and the cyclization to form an iminium ion resulting in release from the peptide synthetase. Deprotonation of this intermediate and oxidation of the pyrroline ring would give rise to peramine. In Epichloe species that produce only peramine, the peramine synthetase gene is not localized in a gene cluster, in contrast to Metarhizium species that contain additional pyrrolopyrazine biosynthesis genes. The 2-oxoglutarate-Fe(II) type oxidoreductase ppzC hydroxylates peramine to yield the newly identified compound 8-hydroxyperamine whereas ppzD converts L-proline into trans-4-hydroxy-L-proline, a precursor of peramine biosynthesis. In Metarhizium majus (strain ARSEF 297), this protein is Sulfatase ppz1.